Consider the following 144-residue polypeptide: MKYLGIDYGTRRTGIAVTDGAGMMAFPRRTIVMSTRDAFFAELLSVVEEERPAGVVVGLPLLAGGEETLITRQVRNFVARLRRRSSLPVYLVAEELSSFEAGEDLREAGLSFREREAVVDQQAAVRILESFLNLPEDRRIPLEG.

Belongs to the YqgF nuclease family.

It is found in the cytoplasm. Functionally, could be a nuclease involved in processing of the 5'-end of pre-16S rRNA. The protein is Putative pre-16S rRNA nuclease of Oleidesulfovibrio alaskensis (strain ATCC BAA-1058 / DSM 17464 / G20) (Desulfovibrio alaskensis).